The sequence spans 833 residues: Leucine--tRNA ligase (833 aa).

Residues 41 to 52 (PYPSGAGLHVGH) carry the 'HIGH' region motif. The 'KMSKS' region signature appears at 610 to 614 (KMSKS). Residue Lys613 participates in ATP binding.

It belongs to the class-I aminoacyl-tRNA synthetase family.

The protein resides in the cytoplasm. The enzyme catalyses tRNA(Leu) + L-leucine + ATP = L-leucyl-tRNA(Leu) + AMP + diphosphate. This Streptococcus pneumoniae (strain Taiwan19F-14) protein is Leucine--tRNA ligase.